The sequence spans 367 residues: BTB/POZ domain-containing protein Tiwaz (367 aa).

Disordered stretches follow at residues 16–46 (LTVDSSCPKRKKCDMDRERERDVKALEPRDL) and 62–87 (SSPTVSPTISNSSSPTPTPPASSSVT). Residues 28 to 45 (CDMDRERERDVKALEPRD) are compositionally biased toward basic and acidic residues. The 71-residue stretch at 135–205 (APVHIDVGGT…MRNSRLLIAE (71 aa)) folds into the BTB domain. The segment at 240-261 (GNYLVAPPTPPARHIKTSPRTS) is disordered.

Functions with the transcription factor TfAP-2 to regulate octopamine neuronal signaling pathways that control behaviors such as male aggression, male mating, and the initiation of feeding. Required for TfAP-2 transcriptional activity in octopaminergic neurons. Functions with TfAP-2 to regulate expression of genes which are involved in promoting octopamine production and secretion from octopaminergic neurons, such as Tbh and Vmat. Octopamine then modulates feeding and male aggression by regulating the expression of the satiation hormone Dsk in insulin-producing cells (IPCs). Functions with octopamine and Dsk as part of a negative feedback loop to prevent overeating; acts with TfAP-2 to regulate octopamine signaling pathways that initiate feeding, then octopamine activates expression of Dsk which inhibits consummatory behavior. May also be involved in negatively regulating nociception in larvae to prevent spontaneous pain and hyperalgesia. This Drosophila melanogaster (Fruit fly) protein is BTB/POZ domain-containing protein Tiwaz.